The primary structure comprises 188 residues: Adenine phosphoribosyltransferase (188 aa).

Belongs to the purine/pyrimidine phosphoribosyltransferase family. As to quaternary structure, homodimer.

It is found in the cytoplasm. It catalyses the reaction AMP + diphosphate = 5-phospho-alpha-D-ribose 1-diphosphate + adenine. Its pathway is purine metabolism; AMP biosynthesis via salvage pathway; AMP from adenine: step 1/1. Functionally, catalyzes a salvage reaction resulting in the formation of AMP, that is energically less costly than de novo synthesis. The sequence is that of Adenine phosphoribosyltransferase from Paraburkholderia phytofirmans (strain DSM 17436 / LMG 22146 / PsJN) (Burkholderia phytofirmans).